Reading from the N-terminus, the 316-residue chain is MQILLANPRGFCAGVDRAISIVENALAIYGAPIYVRHEVVHNRYVVDSLRERGAIFIEQISEVPDGAILIFSAHGVSQAVRNEAKSRDLTVFDATCPLVTKVHMEVARASRRGEESILIGHAGHPEVEGTMGQYSNPEGGMYLVESPDDVWKLTVKNEEKLSFMTQTTLSVDDTSDVIDALRKRFPKIVGPRKDDICYATTNRQEAVRALAEQAEVVLVVGSKNSSNSNRLAELAQRMGKHAFLIDDAKDIQEEWVKEVKCVGVTAGASAPDILVQNVVARLQQLGGGEAIPLEGREENIVFEVPKELRVDIREVD.

Cysteine 12 contacts [4Fe-4S] cluster. Residues histidine 41 and histidine 74 each coordinate (2E)-4-hydroxy-3-methylbut-2-enyl diphosphate. The dimethylallyl diphosphate site is built by histidine 41 and histidine 74. 2 residues coordinate isopentenyl diphosphate: histidine 41 and histidine 74. Residue cysteine 96 coordinates [4Fe-4S] cluster. Histidine 124 contributes to the (2E)-4-hydroxy-3-methylbut-2-enyl diphosphate binding site. Dimethylallyl diphosphate is bound at residue histidine 124. Histidine 124 is a binding site for isopentenyl diphosphate. Glutamate 126 (proton donor) is an active-site residue. Threonine 167 serves as a coordination point for (2E)-4-hydroxy-3-methylbut-2-enyl diphosphate. Residue cysteine 197 participates in [4Fe-4S] cluster binding. Serine 225, serine 226, asparagine 227, and serine 269 together coordinate (2E)-4-hydroxy-3-methylbut-2-enyl diphosphate. Residues serine 225, serine 226, asparagine 227, and serine 269 each coordinate dimethylallyl diphosphate. Isopentenyl diphosphate is bound by residues serine 225, serine 226, asparagine 227, and serine 269.

The protein belongs to the IspH family. As to quaternary structure, homodimer. It depends on [4Fe-4S] cluster as a cofactor.

The enzyme catalyses isopentenyl diphosphate + 2 oxidized [2Fe-2S]-[ferredoxin] + H2O = (2E)-4-hydroxy-3-methylbut-2-enyl diphosphate + 2 reduced [2Fe-2S]-[ferredoxin] + 2 H(+). It carries out the reaction dimethylallyl diphosphate + 2 oxidized [2Fe-2S]-[ferredoxin] + H2O = (2E)-4-hydroxy-3-methylbut-2-enyl diphosphate + 2 reduced [2Fe-2S]-[ferredoxin] + 2 H(+). It participates in isoprenoid biosynthesis; dimethylallyl diphosphate biosynthesis; dimethylallyl diphosphate from (2E)-4-hydroxy-3-methylbutenyl diphosphate: step 1/1. The protein operates within isoprenoid biosynthesis; isopentenyl diphosphate biosynthesis via DXP pathway; isopentenyl diphosphate from 1-deoxy-D-xylulose 5-phosphate: step 6/6. Functionally, catalyzes the conversion of 1-hydroxy-2-methyl-2-(E)-butenyl 4-diphosphate (HMBPP) into a mixture of isopentenyl diphosphate (IPP) and dimethylallyl diphosphate (DMAPP). Acts in the terminal step of the DOXP/MEP pathway for isoprenoid precursor biosynthesis. This Shigella flexneri serotype 5b (strain 8401) protein is 4-hydroxy-3-methylbut-2-enyl diphosphate reductase.